The primary structure comprises 710 residues: Assimilatory nitrate reductase catalytic subunit (710 aa).

The 4Fe-4S Mo/W bis-MGD-type domain occupies 19-77 (EKTYDTQCPFCSMQCKMQLVEQTIVTRKKYTAIGIDNPTTQGRLCIKGMNAHQHALNSS). [4Fe-4S] cluster-binding residues include cysteine 26, cysteine 29, cysteine 33, and cysteine 63.

This sequence belongs to the prokaryotic molybdopterin-containing oxidoreductase family. Requires [4Fe-4S] cluster as cofactor. Mo-bis(molybdopterin guanine dinucleotide) is required as a cofactor.

Its pathway is nitrogen metabolism; nitrate reduction (denitrification); dinitrogen from nitrate: step 1/4. Its function is as follows. Nitrate reductase is a key enzyme involved in the first step of nitrate assimilation in plants, fungi and bacteria. The chain is Assimilatory nitrate reductase catalytic subunit (nasC) from Bacillus subtilis (strain 168).